The primary structure comprises 427 residues: 3-phosphoshikimate 1-carboxyvinyltransferase (427 aa).

3-phosphoshikimate-binding residues include K20, S21, and R25. K20 contributes to the phosphoenolpyruvate binding site. Residues G92 and R120 each contribute to the phosphoenolpyruvate site. Positions 166, 168, 312, and 339 each coordinate 3-phosphoshikimate. Q168 lines the phosphoenolpyruvate pocket. D312 (proton acceptor) is an active-site residue. Residues R343 and R385 each coordinate phosphoenolpyruvate.

This sequence belongs to the EPSP synthase family. As to quaternary structure, monomer.

The protein resides in the cytoplasm. The catalysed reaction is 3-phosphoshikimate + phosphoenolpyruvate = 5-O-(1-carboxyvinyl)-3-phosphoshikimate + phosphate. It functions in the pathway metabolic intermediate biosynthesis; chorismate biosynthesis; chorismate from D-erythrose 4-phosphate and phosphoenolpyruvate: step 6/7. In terms of biological role, catalyzes the transfer of the enolpyruvyl moiety of phosphoenolpyruvate (PEP) to the 5-hydroxyl of shikimate-3-phosphate (S3P) to produce enolpyruvyl shikimate-3-phosphate and inorganic phosphate. This is 3-phosphoshikimate 1-carboxyvinyltransferase from Streptococcus thermophilus (strain ATCC BAA-491 / LMD-9).